A 368-amino-acid chain; its full sequence is tRNA-specific 2-thiouridylase MnmA (368 aa).

ATP contacts are provided by residues 11–18 (GMSGGVDS) and M37. Residues 97-99 (NPD) are interaction with target base in tRNA. The active-site Nucleophile is C102. A disulfide bridge links C102 with C199. G127 contributes to the ATP binding site. Positions 149 to 151 (KDQ) are interaction with tRNA. C199 serves as the catalytic Cysteine persulfide intermediate. An interaction with tRNA region spans residues 311–312 (RY).

This sequence belongs to the MnmA/TRMU family. Interacts with TusE.

The protein localises to the cytoplasm. The catalysed reaction is S-sulfanyl-L-cysteinyl-[protein] + uridine(34) in tRNA + AH2 + ATP = 2-thiouridine(34) in tRNA + L-cysteinyl-[protein] + A + AMP + diphosphate + H(+). Functionally, catalyzes the 2-thiolation of uridine at the wobble position (U34) of tRNA(Lys), tRNA(Glu) and tRNA(Gln), leading to the formation of s(2)U34, the first step of tRNA-mnm(5)s(2)U34 synthesis. Sulfur is provided by IscS, via a sulfur-relay system. Binds ATP and its substrate tRNAs. This Escherichia coli O157:H7 protein is tRNA-specific 2-thiouridylase MnmA.